A 128-amino-acid chain; its full sequence is RutC family protein BU371 (128 aa).

This sequence belongs to the RutC family.

The chain is RutC family protein BU371 from Buchnera aphidicola subsp. Acyrthosiphon pisum (strain APS) (Acyrthosiphon pisum symbiotic bacterium).